Here is a 259-residue protein sequence, read N- to C-terminus: Acyl-[acyl-carrier-protein]--UDP-N-acetylglucosamine O-acyltransferase (259 aa).

Belongs to the transferase hexapeptide repeat family. LpxA subfamily. In terms of assembly, homotrimer.

The protein localises to the cytoplasm. It carries out the reaction a (3R)-hydroxyacyl-[ACP] + UDP-N-acetyl-alpha-D-glucosamine = a UDP-3-O-[(3R)-3-hydroxyacyl]-N-acetyl-alpha-D-glucosamine + holo-[ACP]. Its pathway is glycolipid biosynthesis; lipid IV(A) biosynthesis; lipid IV(A) from (3R)-3-hydroxytetradecanoyl-[acyl-carrier-protein] and UDP-N-acetyl-alpha-D-glucosamine: step 1/6. Functionally, involved in the biosynthesis of lipid A, a phosphorylated glycolipid that anchors the lipopolysaccharide to the outer membrane of the cell. The chain is Acyl-[acyl-carrier-protein]--UDP-N-acetylglucosamine O-acyltransferase from Akkermansia muciniphila (strain ATCC BAA-835 / DSM 22959 / JCM 33894 / BCRC 81048 / CCUG 64013 / CIP 107961 / Muc).